A 599-amino-acid chain; its full sequence is Elongation factor 4 (599 aa).

In terms of domain architecture, tr-type G spans 2 to 185; the sequence is ENIRNFSIIA…AITKRIPPPK (184 aa). Residues 14–19 and 132–135 contribute to the GTP site; these read DHGKST and NKID.

The protein belongs to the TRAFAC class translation factor GTPase superfamily. Classic translation factor GTPase family. LepA subfamily.

The protein resides in the cell inner membrane. The enzyme catalyses GTP + H2O = GDP + phosphate + H(+). Required for accurate and efficient protein synthesis under certain stress conditions. May act as a fidelity factor of the translation reaction, by catalyzing a one-codon backward translocation of tRNAs on improperly translocated ribosomes. Back-translocation proceeds from a post-translocation (POST) complex to a pre-translocation (PRE) complex, thus giving elongation factor G a second chance to translocate the tRNAs correctly. Binds to ribosomes in a GTP-dependent manner. The chain is Elongation factor 4 from Hydrogenobaculum sp. (strain Y04AAS1).